The primary structure comprises 90 residues: RNA-binding protein Hfq (90 aa).

The region spanning 9–68 (DPFLNALRRERVPVSIYLVNGIKLQGQVESFDQFVILLKNTVSQMVYKHAISTVVPARPF) is the Sm domain.

The protein belongs to the Hfq family. As to quaternary structure, homohexamer.

Its function is as follows. RNA chaperone that binds small regulatory RNA (sRNAs) and mRNAs to facilitate mRNA translational regulation in response to envelope stress, environmental stress and changes in metabolite concentrations. Also binds with high specificity to tRNAs. The polypeptide is RNA-binding protein Hfq (Shewanella oneidensis (strain ATCC 700550 / JCM 31522 / CIP 106686 / LMG 19005 / NCIMB 14063 / MR-1)).